We begin with the raw amino-acid sequence, 308 residues long: MVNFTHVSEFVLLGFQGGPGMQAMLFLIFLILYGIAVVGNLGMIVIIWVDAHLHTPMYAFLQSLSLLDICYSSTIAPRALANSMQEDHTISFGGCAAQFFFLSLFGITEAFLLAAMAYDRFIAICNPLLYSVSMSHQVCVLLISGSYLWGVVNAIAQTTMTFRLPFCGSNEINDFFCDVPPLLSLSCSDTFINQLVLLGLCGSIIVSTFLIVLVSYIYIISTILRIPTMQGCQKAFSTCASHLTGVCLFFGTVFFMYAQPSAIFFMEQSKIVSIFYTMVIPMLNPLIYSLRNKEVKQALRRSMQKLSL.

Residues 1–26 (MVNFTHVSEFVLLGFQGGPGMQAMLF) are Extracellular-facing. A helical transmembrane segment spans residues 27–47 (LIFLILYGIAVVGNLGMIVII). Residues 48-58 (WVDAHLHTPMY) are Cytoplasmic-facing. The chain crosses the membrane as a helical span at residues 59–81 (AFLQSLSLLDICYSSTIAPRALA). Residues 82–95 (NSMQEDHTISFGGC) are Extracellular-facing. A disulfide bridge connects residues Cys95 and Cys177. Residues 96 to 116 (AAQFFFLSLFGITEAFLLAAM) form a helical membrane-spanning segment. Residues 117–137 (AYDRFIAICNPLLYSVSMSHQ) are Cytoplasmic-facing. The helical transmembrane segment at 138 to 158 (VCVLLISGSYLWGVVNAIAQT) threads the bilayer. At 159–203 (TMTFRLPFCGSNEINDFFCDVPPLLSLSCSDTFINQLVLLGLCGS) the chain is on the extracellular side. Residues 204 to 224 (IIVSTFLIVLVSYIYIISTIL) form a helical membrane-spanning segment. At 225 to 245 (RIPTMQGCQKAFSTCASHLTG) the chain is on the cytoplasmic side. A helical membrane pass occupies residues 246-266 (VCLFFGTVFFMYAQPSAIFFM). At 267 to 269 (EQS) the chain is on the extracellular side. Residues 270–290 (KIVSIFYTMVIPMLNPLIYSL) traverse the membrane as a helical segment. Residues 291–308 (RNKEVKQALRRSMQKLSL) are Cytoplasmic-facing.

This sequence belongs to the G-protein coupled receptor 1 family.

It localises to the cell membrane. Odorant receptor. This is Olfactory receptor OR9H1 from Homo sapiens (Human).